The chain runs to 686 residues: ATP-dependent zinc metalloprotease FtsH 1 (686 aa).

The Cytoplasmic segment spans residues 1–33 (MCFCIVSSPEAMHSNADSPSSGPGLQPVWTTLR). The helical transmembrane segment at 34–54 (SPYVFWIGGAILLALLVHLGI) threads the bilayer. At 55-164 (KWQQASAPVR…TFAATQESDW (110 aa)) the chain is on the periplasmic side. The helical transmembrane segment at 165-185 (VGTLLLWGLPLGLIVGIWLFF) threads the bilayer. The Cytoplasmic segment spans residues 186–686 (MRRMATGGRE…AEGASPSSQG (501 aa)). Residue 257-264 (GPPGTGKT) participates in ATP binding. Zn(2+) is bound at residue H479. Residue E480 is part of the active site. Zn(2+)-binding residues include H483 and D555. The disordered stretch occupies residues 661–686 (YAWLKEGDGTSRNSASAEGASPSSQG). The segment covering 670 to 686 (TSRNSASAEGASPSSQG) has biased composition (polar residues).

In the central section; belongs to the AAA ATPase family. This sequence in the C-terminal section; belongs to the peptidase M41 family. In terms of assembly, homohexamer. Zn(2+) serves as cofactor.

It localises to the cell inner membrane. Acts as a processive, ATP-dependent zinc metallopeptidase for both cytoplasmic and membrane proteins. Plays a role in the quality control of integral membrane proteins. This Salinibacter ruber (strain M8) protein is ATP-dependent zinc metalloprotease FtsH 1.